The chain runs to 474 residues: MGPKFGTSGLRGLATELVGSVSALYATAFSRMLLDRGRVAPGATVLVGRDFRDSSSEIAAICMAALARAGMVPVDCGGLPTPALALYGRKLGAASLMITGSHIPADRNGIKFYLPDGEINKADEQAITALAEQLSADADATRVECGRGADHSSEATDFYIQRYETLLPKSGLKGLKIGLYQHSSVARDILTTILEGHGANVVPVGRSEVFIPVDTEAISAATCKMLAAWAKEFAFDAIVSSDADADRPLLTDETGTPLRGDLLGLICARLLEAKLIATPITSNSGIEAASGVEVVRTRVGSPYVIAAMTEAVARGKQRVMGFEANGGVMLGSNFSFGGASLPALPTRDCVLPIIAALHMAVEAKTPLSGIVAMHRLPVALSGRIENYPFDRSDALVAFLKASKANVSHLFSRIGRVAGTDDVDGLRLTFEGGRILHIRPSGNAPELRCYVEADDPDAAEHLLAQGLAVLNSSMV.

The active-site Phosphoserine intermediate is Ser-101. Ser-101, Asp-242, Asp-244, and Asp-246 together coordinate Mg(2+).

This sequence belongs to the phosphohexose mutase family. Mg(2+) is required as a cofactor.

The catalysed reaction is alpha-D-mannose 1-phosphate = D-mannose 6-phosphate. The chain is Phosphomannomutase (noeK) from Sinorhizobium fredii (strain NBRC 101917 / NGR234).